We begin with the raw amino-acid sequence, 606 residues long: Granule-bound starch synthase 1, chloroplastic/amyloplastic (606 aa).

The transit peptide at 1 to 76 (MSALTTSQLA…GSRRFPSVVV (76 aa)) directs the protein to the chloroplast. Residues 29–67 (RHGFQGLKPRSPAGGDASSLSVTTSARATPKQQRSVQRG) form a disordered region. Positions 46–66 (SSLSVTTSARATPKQQRSVQR) are enriched in polar residues. Position 97 (Lys-97) interacts with ADP-alpha-D-glucose.

This sequence belongs to the glycosyltransferase 1 family. Bacterial/plant glycogen synthase subfamily.

It localises to the plastid. It is found in the chloroplast. Its subcellular location is the amyloplast. It carries out the reaction an NDP-alpha-D-glucose + [(1-&gt;4)-alpha-D-glucosyl](n) = [(1-&gt;4)-alpha-D-glucosyl](n+1) + a ribonucleoside 5'-diphosphate + H(+). It participates in glycan biosynthesis; starch biosynthesis. Required for the synthesis of amylose in endosperm. The protein is Granule-bound starch synthase 1, chloroplastic/amyloplastic (WAXY) of Oryza sativa (Rice).